The sequence spans 468 residues: Glucose-dependent insulinotropic receptor (468 aa).

At 1–6 (MESSFS) the chain is on the extracellular side. A helical transmembrane segment spans residues 7-27 (FGVILAVLTILIIAVNALVVV). The Cytoplasmic segment spans residues 28-37 (AMLLSIYKND). Residues 38-58 (GVGLCFTLNLAVADTLIGVAI) form a helical membrane-spanning segment. The Extracellular portion of the chain corresponds to 59–81 (SGLVTDQLSSSAQHTQKTLCSLR). The helical transmembrane segment at 82 to 102 (MAFVTSSAAASVLTVMLIAFD) threads the bilayer. Over 103-125 (RYLAIKQPLRYFQIMNGLVAGGC) the chain is Cytoplasmic. A helical transmembrane segment spans residues 126–146 (IAGLWLISYLIGFLPLGVSIF). Residues 147–164 (QQTTYHGPCTFFAVFHPR) lie on the Extracellular side of the membrane. A helical membrane pass occupies residues 165 to 185 (FVLTLSCAGFFPAVLLFVFFY). The Cytoplasmic portion of the chain corresponds to 186-226 (CDMLKIASVHSQHIRKMEHAGAMVGACRPPRPVNDFKAVRT). A helical membrane pass occupies residues 227–247 (VSVLIGSFTLSWSPFLITSIV). Over 248–262 (QVACHKCCLYQVLEK) the chain is Extracellular. The helical transmembrane segment at 263 to 283 (YLWLLGVGNSLLNPLIYAYWQ) threads the bilayer. Topologically, residues 284-468 (REVRQQLCHM…MSDPLRTCRG (185 aa)) are cytoplasmic.

The protein belongs to the G-protein coupled receptor 1 family. In terms of tissue distribution, expression restricted to the beta-cells of pancreatic islets.

It localises to the cell membrane. Functionally, receptor for the endogenous fatty-acid ethanolamide oleoylethanolamide (OEA) and lysophosphatidylcholine (LPC). Functions as a glucose-dependent insulinotropic receptor. The activity of this receptor is mediated by G proteins which activate adenylate cyclase. Seems to act through a G(s) mediated pathway. The protein is Glucose-dependent insulinotropic receptor (Gpr119) of Rattus norvegicus (Rat).